A 565-amino-acid polypeptide reads, in one-letter code: Hemagglutinin-neuraminidase (565 aa).

Residues 1–19 are Intravirion-facing; it reads MVAEDAPVRATCRVLFRTT. A helical membrane pass occupies residues 20–40; that stretch reads TLIFLCTLLALSISILYESLI. At 41 to 565 the chain is on the virion surface side; that stretch reads TQKQIMSQAG…VPFIRQVTLS (525 aa). Asn139 is a glycosylation site (N-linked (GlcNAc...) asparagine; by host). 3 cysteine pairs are disulfide-bonded: Cys161–Cys185, Cys175–Cys236, and Cys227–Cys240. The interval 223–228 is involved in neuraminidase activity; sequence NRKSCS. An N-linked (GlcNAc...) asparagine; by host glycan is attached at Asn267. Cystine bridges form between Cys333–Cys454, Cys365–Cys375, and Cys448–Cys458. An N-linked (GlcNAc...) asparagine; by host glycan is attached at Asn504. A disulfide bridge links Cys528 with Cys539.

It belongs to the paramyxoviruses hemagglutinin-neuraminidase family. As to quaternary structure, homotetramer; composed of disulfide-linked homodimers. Interacts with F protein trimer.

It localises to the virion membrane. Its subcellular location is the host cell membrane. The enzyme catalyses Hydrolysis of alpha-(2-&gt;3)-, alpha-(2-&gt;6)-, alpha-(2-&gt;8)- glycosidic linkages of terminal sialic acid residues in oligosaccharides, glycoproteins, glycolipids, colominic acid and synthetic substrates.. Functionally, attaches the virus to sialic acid-containing cell receptors and thereby initiating infection. Binding of HN protein to the receptor induces a conformational change that allows the F protein to trigger virion/cell membranes fusion. In terms of biological role, neuraminidase activity ensures the efficient spread of the virus by dissociating the mature virions from the neuraminic acid containing glycoproteins. This Canis lupus familiaris (Dog) protein is Hemagglutinin-neuraminidase (HN).